Consider the following 729-residue polypeptide: E3 ubiquitin-protein ligase SH3RF2 (729 aa).

The RING-type zinc-finger motif lies at 12–53 (CPVCFEKLDVTAKVLPCQHTFCKPCLQRVFKAHKELRCPECR). Residues 78 to 105 (SGQSSGRGGSFRRPGTMTLQDGRKSRTN) are disordered. SH3 domains lie at 125 to 184 (DGVP…VIKQ) and 187 to 252 (QPPP…PNLT). The interval 258–297 (EKNKGRQSSRTKNLSLVSSSSRGNTSTLRRGPGSRRKVPG) is disordered. A compositionally biased stretch (polar residues) spans 263–285 (RQSSRTKNLSLVSSSSRGNTSTL). The interaction with PAK4 stretch occupies residues 370-459 (VVSLPGSQQH…RSPGLYTTWT (90 aa)). Residues 380–441 (LSANMFVALH…PNNYVIPIFR (62 aa)) enclose the SH3 3 domain. Disordered regions lie at residues 497 to 526 (STAG…QRPL) and 610 to 677 (KSEP…SQPE). Polar residues predominate over residues 517–526 (RKNGSLQRPL). Residues 641 to 646 (KTVRFQ) form an interaction with PPP1CA region. Ser649 bears the Phosphoserine mark.

The protein belongs to the SH3RF family. In terms of assembly, interacts with FASLG and PPP1CA. Interacts with PAK4 and TNFRSF1A. Interacts with DLK1, MAP3K10/MLK2, MAPK8IP1/JIP1, MAPK8IP2/JIP2 and MAPK8IP3/JIP3. Interacts with RAC1 (both active GTP- or inactive GDP-bound forms). Autoubiquitinated. Heart (at protein level). Up-regulated in colon cancer tissues as compared to normal colon tissues (at protein level). Testis. In the heart, present in the apex, left atrium, right atrium, left ventricle and right ventricle, but not in the aorta.

It localises to the nucleus. The catalysed reaction is S-ubiquitinyl-[E2 ubiquitin-conjugating enzyme]-L-cysteine + [acceptor protein]-L-lysine = [E2 ubiquitin-conjugating enzyme]-L-cysteine + N(6)-ubiquitinyl-[acceptor protein]-L-lysine.. The protein operates within protein modification; protein ubiquitination. Has E3 ubiquitin-protein ligase activity. Acts as an anti-apoptotic regulator of the JNK pathway by ubiquitinating and promoting the degradation of SH3RF1, a scaffold protein that is required for pro-apoptotic JNK activation. Facilitates TNF-alpha-mediated recruitment of adapter proteins TRADD and RIPK1 to TNFRSF1A and regulates PAK4 protein stability via inhibition of its ubiquitin-mediated proteasomal degradation. Inhibits PPP1CA phosphatase activity. The protein is E3 ubiquitin-protein ligase SH3RF2 (SH3RF2) of Homo sapiens (Human).